A 388-amino-acid chain; its full sequence is Carbamoyl phosphate synthase small chain (388 aa).

A CPSase region spans residues 1–194; that stretch reads MAQNPLSKPT…WPEGYARQEA (194 aa). Positions 53, 246, and 248 each coordinate L-glutamine. One can recognise a Glutamine amidotransferase type-1 domain in the interval 198-387; sequence KVVAIDYGAK…AAAMDAQKAE (190 aa). C276 (nucleophile) is an active-site residue. Residues L277, Q280, N318, G320, and F321 each contribute to the L-glutamine site. Catalysis depends on residues H360 and E362.

This sequence belongs to the CarA family. As to quaternary structure, composed of two chains; the small (or glutamine) chain promotes the hydrolysis of glutamine to ammonia, which is used by the large (or ammonia) chain to synthesize carbamoyl phosphate. Tetramer of heterodimers (alpha,beta)4.

It carries out the reaction hydrogencarbonate + L-glutamine + 2 ATP + H2O = carbamoyl phosphate + L-glutamate + 2 ADP + phosphate + 2 H(+). It catalyses the reaction L-glutamine + H2O = L-glutamate + NH4(+). It participates in amino-acid biosynthesis; L-arginine biosynthesis; carbamoyl phosphate from bicarbonate: step 1/1. Its pathway is pyrimidine metabolism; UMP biosynthesis via de novo pathway; (S)-dihydroorotate from bicarbonate: step 1/3. Small subunit of the glutamine-dependent carbamoyl phosphate synthetase (CPSase). CPSase catalyzes the formation of carbamoyl phosphate from the ammonia moiety of glutamine, carbonate, and phosphate donated by ATP, constituting the first step of 2 biosynthetic pathways, one leading to arginine and/or urea and the other to pyrimidine nucleotides. The small subunit (glutamine amidotransferase) binds and cleaves glutamine to supply the large subunit with the substrate ammonia. The chain is Carbamoyl phosphate synthase small chain from Ruegeria pomeroyi (strain ATCC 700808 / DSM 15171 / DSS-3) (Silicibacter pomeroyi).